We begin with the raw amino-acid sequence, 1040 residues long: DNA cross-link repair 1A protein (1040 aa).

The segment at 1 to 190 (MLEDISEEDI…RAGDHPFSSP (190 aa)) is nuclear localization region. The disordered stretch occupies residues 15–76 (SKRKPKRVDP…LGNAGCQTSV (62 aa)). Over residues 53-65 (RAAEAKEVKDHEV) the composition is skewed to basic and acidic residues. A UBZ4-type zinc finger spans residues 119-149 (DGYCPNCQMPFSSLIGQTPRWHVFECLDSPP). Cys-122, Cys-125, His-140, and Cys-144 together coordinate Zn(2+). Residues Lys-202, Lys-236, Lys-269, Lys-353, Lys-361, Lys-429, Lys-488, Lys-508, Lys-517, Lys-533, and Lys-536 each participate in a glycyl lysine isopeptide (Lys-Gly) (interchain with G-Cter in SUMO2) cross-link. The segment at 396 to 614 (LPYDLACTGG…KSLSDLEFDA (219 aa)) is nuclear focus formation. Disordered regions lie at residues 582-602 (GINL…CKRK) and 623-651 (SVEL…ACQK). Phosphoserine is present on Ser-590. Glycyl lysine isopeptide (Lys-Gly) (interchain with G-Cter in SUMO2) cross-links involve residues Lys-668, Lys-670, and Lys-674.

This sequence belongs to the DNA repair metallo-beta-lactamase (DRMBL) family. Binds constitutively to TP53BP1. Binds CDC27, which is itself a component of the anaphase promoting complex (APC). Binds PIAS1. Expressed in brain, heart, kidney, liver, pancreas, placenta and skeletal muscle.

It localises to the nucleus. The enzyme catalyses a beta-lactam + H2O = a substituted beta-amino acid. Its activity is regulated as follows. Beta-lactamase activity is inhibited by sulbactam. May be required for DNA interstrand cross-link repair. Also required for checkpoint mediated cell cycle arrest in early prophase in response to mitotic spindle poisons. Possesses beta-lactamase activity, catalyzing the hydrolysis of penicillin G and nitrocefin. Exhibits no activity towards other beta-lactam antibiotic classes including cephalosporins (cefotaxime) and carbapenems (imipenem). The protein is DNA cross-link repair 1A protein (DCLRE1A) of Homo sapiens (Human).